Here is a 257-residue protein sequence, read N- to C-terminus: Deoxyribose-phosphate aldolase (257 aa).

Aspartate 102 (proton donor/acceptor) is an active-site residue. The active-site Schiff-base intermediate with acetaldehyde is the lysine 166. Lysine 198 functions as the Proton donor/acceptor in the catalytic mechanism.

The protein belongs to the DeoC/FbaB aldolase family. DeoC type 2 subfamily.

It is found in the cytoplasm. The catalysed reaction is 2-deoxy-D-ribose 5-phosphate = D-glyceraldehyde 3-phosphate + acetaldehyde. The protein operates within carbohydrate degradation; 2-deoxy-D-ribose 1-phosphate degradation; D-glyceraldehyde 3-phosphate and acetaldehyde from 2-deoxy-alpha-D-ribose 1-phosphate: step 2/2. In terms of biological role, catalyzes a reversible aldol reaction between acetaldehyde and D-glyceraldehyde 3-phosphate to generate 2-deoxy-D-ribose 5-phosphate. The sequence is that of Deoxyribose-phosphate aldolase from Shewanella piezotolerans (strain WP3 / JCM 13877).